We begin with the raw amino-acid sequence, 418 residues long: Glutamyl-tRNA reductase (418 aa).

Residues 57–60, Ser113, 118–120, and Gln124 contribute to the substrate site; these read TCNR and DFE. The active-site Nucleophile is the Cys58. 193 to 198 lines the NADP(+) pocket; that stretch reads GTGKIG.

The protein belongs to the glutamyl-tRNA reductase family. As to quaternary structure, homodimer.

It carries out the reaction (S)-4-amino-5-oxopentanoate + tRNA(Glu) + NADP(+) = L-glutamyl-tRNA(Glu) + NADPH + H(+). Its pathway is porphyrin-containing compound metabolism; protoporphyrin-IX biosynthesis; 5-aminolevulinate from L-glutamyl-tRNA(Glu): step 1/2. Its function is as follows. Catalyzes the NADPH-dependent reduction of glutamyl-tRNA(Glu) to glutamate 1-semialdehyde (GSA). This is Glutamyl-tRNA reductase from Christiangramia forsetii (strain DSM 17595 / CGMCC 1.15422 / KT0803) (Gramella forsetii).